The following is a 60-amino-acid chain: Large ribosomal subunit protein bL32 (60 aa).

Residues 1–16 (MAVPRRKTSPSRRGMR) show a composition bias toward basic residues. The interval 1–60 (MAVPRRKTSPSRRGMRRSADALKRPTYAEDKDSGELRRPHHLDLKTGMYKGRQVIKKKDA) is disordered. A compositionally biased stretch (basic and acidic residues) spans 17-44 (RSADALKRPTYAEDKDSGELRRPHHLDL).

It belongs to the bacterial ribosomal protein bL32 family.

The protein is Large ribosomal subunit protein bL32 of Rhodopseudomonas palustris (strain BisB5).